Consider the following 236-residue polypeptide: Large ribosomal subunit protein uL3 (236 aa).

Belongs to the universal ribosomal protein uL3 family. As to quaternary structure, part of the 50S ribosomal subunit. Forms a cluster with proteins L14 and L19.

In terms of biological role, one of the primary rRNA binding proteins, it binds directly near the 3'-end of the 23S rRNA, where it nucleates assembly of the 50S subunit. In Mycoplasmoides gallisepticum (strain R(low / passage 15 / clone 2)) (Mycoplasma gallisepticum), this protein is Large ribosomal subunit protein uL3.